The primary structure comprises 319 residues: Cell division protein FtsN (319 aa).

Positions 1–30 (MAQRDYVRRSQPAPSRRKKSTSRKKQRNLP) are disordered. The Cytoplasmic portion of the chain corresponds to 1-33 (MAQRDYVRRSQPAPSRRKKSTSRKKQRNLPAVS). The tract at residues 4–6 (RDY) is mediates interaction with FtsA. The span at 15–27 (SRRKKSTSRKKQR) shows a compositional bias: basic residues. Residues 34 to 54 (PAMVAIAAAVLVTFIGGLYFI) form a helical membrane-spanning segment. At 55 to 319 (THHKKEESET…TNCIRLAAGG (265 aa)) the chain is on the periplasmic side. Disordered regions lie at residues 60 to 79 (EESE…PPKP) and 89 to 113 (LESR…TPEQ). Repeat copies occupy residues 115 to 120 (TPEQRQ), 145 to 150 (TPEQRQ), 197 to 200 (QSKP), and 220 to 223 (QSKP). Positions 115–150 (TPEQRQLLEQMQADMRQQPTQLVEVPWNEQTPEQRQ) are 2 X 6 AA repeats. The disordered stretch occupies residues 140-245 (PWNEQTPEQR…PKPTAEKKDE (106 aa)). The span at 143 to 171 (EQTPEQRQQTLQRQRQAQQLAEQQRLAQQ) shows a compositional bias: low complexity. A compositionally biased stretch (polar residues) spans 172–221 (SRTTEQSWQQQTRTSQAAPVQAQPRQSKPASSQQPYQDLLQTPAHTTAQS). Residues 197–223 (QSKPASSQQPYQDLLQTPAHTTAQSKP) form a 2 X 4 AA repeats region. The segment covering 222–238 (KPQQAAPVARAADAPKP) has biased composition (low complexity). An SPOR domain is found at 242-316 (KKDERRWMVQ…AGHTNCIRLA (75 aa)). Cysteines 252 and 312 form a disulfide.

The protein belongs to the FtsN family. Interacts with FtsA via its N-terminal cytoplasmic domain. Interacts with ZapA, FtsQ, FtsW and FtsI.

The protein localises to the cell inner membrane. Essential cell division protein that activates septal peptidoglycan synthesis and constriction of the cell. Acts on both sides of the membrane, via interaction with FtsA in the cytoplasm and interaction with the FtsQBL complex in the periplasm. These interactions may induce a conformational switch in both FtsA and FtsQBL, leading to septal peptidoglycan synthesis by FtsI and associated synthases. Required for full FtsI activity. Required for recruitment of AmiC to the septal ring. In Escherichia coli (strain K12), this protein is Cell division protein FtsN.